Reading from the N-terminus, the 292-residue chain is Brix domain-containing protein ZK795.3 (292 aa).

Residues 78–259 (PKIVITTSRD…PYQIKLGTLE (182 aa)) enclose the Brix domain.

This is Brix domain-containing protein ZK795.3 from Caenorhabditis elegans.